A 207-amino-acid polypeptide reads, in one-letter code: Putative tributyltin chloride resistance protein (207 aa).

Residues 37–122 form a slt-type domain region; sequence NLPIELALMP…YHAIAALNLG (86 aa). Glutamate 49 is a catalytic residue.

Belongs to the transglycosylase Slt family.

In Alteromonas sp. (strain M-1), this protein is Putative tributyltin chloride resistance protein (tbtA).